The sequence spans 158 residues: MAEQSTKSVLFVCLGNICRSPIAEAVFRKLVTDQNISENWRVDSAATSGYEIGNPPDYRGQSCMKRHGIPMSHVARQITREDFATFDYILCMDESNLRDLNRKSNQVKTCKAKIELLGSYDPQKQLIIEDPYYGNDSDFETVYQQCVRCCRAFLEKAH.

The residue at position 2 (alanine 2) is an N-acetylalanine. Catalysis depends on cysteine 13, which acts as the Nucleophile. Residue arginine 19 is part of the active site. Catalysis depends on aspartate 130, which acts as the Proton donor. 2 positions are modified to phosphotyrosine: tyrosine 132 and tyrosine 133.

This sequence belongs to the low molecular weight phosphotyrosine protein phosphatase family. Interacts with EPHA2; dephosphorylates EPHA2. Interacts with EPHB1. Interacts with the SH3 domain of SPTAN1. Phosphorylated by LCK. Phosphorylation at Tyr-132 increases its phosphatase activity.

The protein localises to the cytoplasm. It catalyses the reaction O-phospho-L-tyrosyl-[protein] + H2O = L-tyrosyl-[protein] + phosphate. It carries out the reaction a phosphate monoester + H2O = an alcohol + phosphate. With respect to regulation, inhibited by sulfhydryl reagents. In terms of biological role, acts on tyrosine phosphorylated proteins, low-MW aryl phosphates and natural and synthetic acyl phosphates with differences in substrate specificity between isoform 1 and isoform 2. This chain is Low molecular weight phosphotyrosine protein phosphatase (ACP1), found in Pongo abelii (Sumatran orangutan).